A 246-amino-acid chain; its full sequence is ATP synthase subunit a (246 aa).

The next 5 helical transmembrane spans lie at 34-54 (GQTMITTWVVMLLLIGLTFIG), 92-112 (WVPLIGTIFLFVLFANWLGQL), 130-150 (DINTTVALSLIALVSYIYAGL), 155-175 (FGYFKHYFESPILAAVWVLEF), and 196-216 (VVAVLILLVPILVPVPLMILF).

Belongs to the ATPase A chain family. In terms of assembly, F-type ATPases have 2 components, CF(1) - the catalytic core - and CF(0) - the membrane proton channel. CF(1) has five subunits: alpha(3), beta(3), gamma(1), delta(1), epsilon(1). CF(0) has four main subunits: a, b, b' and c.

It is found in the cell inner membrane. Key component of the proton channel; it plays a direct role in the translocation of protons across the membrane. This chain is ATP synthase subunit a, found in Gloeobacter violaceus (strain ATCC 29082 / PCC 7421).